A 192-amino-acid polypeptide reads, in one-letter code: Thymidine kinase (192 aa).

ATP contacts are provided by residues 9 to 16 (ASMNAGKS) and 87 to 90 (DEAQ). Glu88 (proton acceptor) is an active-site residue. The Zn(2+) site is built by Cys145, Cys147, Cys182, and His185.

Belongs to the thymidine kinase family. In terms of assembly, homotetramer.

It is found in the cytoplasm. It carries out the reaction thymidine + ATP = dTMP + ADP + H(+). This is Thymidine kinase from Novosphingobium aromaticivorans (strain ATCC 700278 / DSM 12444 / CCUG 56034 / CIP 105152 / NBRC 16084 / F199).